The sequence spans 401 residues: Phosphoglycerate kinase (401 aa).

Residues 21–23 (DFN), arginine 36, 59–62 (HLGR), arginine 119, and arginine 160 contribute to the substrate site. ATP-binding positions include lysine 212, glutamate 330, and 357–360 (GGDS).

Belongs to the phosphoglycerate kinase family. Monomer.

The protein resides in the cytoplasm. It catalyses the reaction (2R)-3-phosphoglycerate + ATP = (2R)-3-phospho-glyceroyl phosphate + ADP. It participates in carbohydrate degradation; glycolysis; pyruvate from D-glyceraldehyde 3-phosphate: step 2/5. The chain is Phosphoglycerate kinase from Limosilactobacillus fermentum (strain NBRC 3956 / LMG 18251) (Lactobacillus fermentum).